Reading from the N-terminus, the 261-residue chain is Indole-3-glycerol phosphate synthase (261 aa).

The protein belongs to the TrpC family.

The catalysed reaction is 1-(2-carboxyphenylamino)-1-deoxy-D-ribulose 5-phosphate + H(+) = (1S,2R)-1-C-(indol-3-yl)glycerol 3-phosphate + CO2 + H2O. It functions in the pathway amino-acid biosynthesis; L-tryptophan biosynthesis; L-tryptophan from chorismate: step 4/5. This is Indole-3-glycerol phosphate synthase from Oceanobacillus iheyensis (strain DSM 14371 / CIP 107618 / JCM 11309 / KCTC 3954 / HTE831).